The following is a 356-amino-acid chain: 4-hydroxy-2-oxovalerate aldolase (356 aa).

The Pyruvate carboxyltransferase domain maps to 7 to 257 (PRVTDTTLRD…NPGLDVFKLM (251 aa)). A substrate-binding site is contributed by 15–16 (RD). Residue Asp16 participates in Mn(2+) binding. His19 serves as the catalytic Proton acceptor. Residues Ser169 and His196 each contribute to the substrate site. Mn(2+) is bound by residues His196 and His198. Tyr287 contributes to the substrate binding site.

This sequence belongs to the 4-hydroxy-2-oxovalerate aldolase family.

It catalyses the reaction (S)-4-hydroxy-2-oxopentanoate = acetaldehyde + pyruvate. In Thermomicrobium roseum (strain ATCC 27502 / DSM 5159 / P-2), this protein is 4-hydroxy-2-oxovalerate aldolase.